The sequence spans 158 residues: C-type lectin TsL (158 aa).

Residues 1-23 form the signal peptide; that stretch reads MGRFIFVSFGLLVVFLSLSGAKG. Residues 24–158 enclose the C-type lectin domain; that stretch reads SCCTNDSLPM…KNSFLCQCKF (135 aa). Intrachain disulfides connect C26-C37, C54-C154, C61-C156, and C129-C146. N28 is a glycosylation site (N-linked (GlcNAc...) (high mannose) asparagine). Residues Q119, D121, E127, N142, and D143 each coordinate Ca(2+). The Galactose-binding signature appears at 119 to 121; the sequence is QPD.

Belongs to the true venom lectin family. In terms of assembly, homodimer; disulfide-linked. As to expression, expressed by the venom gland.

The protein resides in the secreted. Galactose-binding protein which recognizes specific carbohydrate structures and agglutinates a variety of animal cells by binding to cell-surface glycoproteins and glycolipids. May be a calcium-dependent lectin. This is C-type lectin TsL from Trimeresurus stejnegeri (Chinese green tree viper).